The following is a 343-amino-acid chain: Putative KilA-N domain-containing protein R904 (343 aa).

The KilA-N domain occupies 51–157 (EFSWGNYLNL…IKASVIINDY (107 aa)). Positions 159 to 279 (AKQMFKEHEK…NAVKEYKELY (121 aa)) form a coiled coil.

This chain is Putative KilA-N domain-containing protein R904, found in Acanthamoeba polyphaga mimivirus (APMV).